A 65-amino-acid polypeptide reads, in one-letter code: MPKMKTKSSAKKRLKVLGGGGFKRAHAFKRHILTKKTTKNKRQLRGTSMVDATNVASVRAMMPYA.

The protein belongs to the bacterial ribosomal protein bL35 family.

This Chromobacterium violaceum (strain ATCC 12472 / DSM 30191 / JCM 1249 / CCUG 213 / NBRC 12614 / NCIMB 9131 / NCTC 9757 / MK) protein is Large ribosomal subunit protein bL35.